The primary structure comprises 134 residues: Holo-[acyl-carrier-protein] synthase (134 aa).

Mg(2+) is bound by residues Asp8 and Glu57.

The protein belongs to the P-Pant transferase superfamily. AcpS family. Requires Mg(2+) as cofactor.

The protein localises to the cytoplasm. The enzyme catalyses apo-[ACP] + CoA = holo-[ACP] + adenosine 3',5'-bisphosphate + H(+). Functionally, transfers the 4'-phosphopantetheine moiety from coenzyme A to a Ser of acyl-carrier-protein. The chain is Holo-[acyl-carrier-protein] synthase from Rhizobium leguminosarum bv. trifolii (strain WSM2304).